An 84-amino-acid polypeptide reads, in one-letter code: Cell division topological specificity factor (84 aa).

Belongs to the MinE family.

In terms of biological role, prevents the cell division inhibition by proteins MinC and MinD at internal division sites while permitting inhibition at polar sites. This ensures cell division at the proper site by restricting the formation of a division septum at the midpoint of the long axis of the cell. The polypeptide is Cell division topological specificity factor (Ectopseudomonas mendocina (strain ymp) (Pseudomonas mendocina)).